A 674-amino-acid polypeptide reads, in one-letter code: Ribonuclease E (674 aa).

The S1 motif domain maps to 35–117; sequence GDIYLGLVDN…LTGNISMPGR (83 aa). Residues D296 and D339 each coordinate Mg(2+). C397 and C400 together coordinate Zn(2+). Disordered stretches follow at residues 458 to 529 and 626 to 674; these read PLDL…RRVE and QPRE…SSAE. Basic and acidic residues-rich tracts occupy residues 484-493 and 509-529; these read GSEFSEKENI and TKEK…RRVE. The segment covering 663–674 has biased composition (basic residues); sequence RPGRRRRRSSAE. A C4 Arg-rich motif, probably responsible for interaction with PNPase motif is present at residues 665–673; the sequence is GRRRRRSSA.

This sequence belongs to the RNase E/G family. As to quaternary structure, fractionates in a 250-300 kDa region, which is too small to be the equivalent of an RNA degradosome, as occurs with E.coli RNase E. Interacts with polynucleotide phosphorylase (PNPase, pnp), probably via the C4 Arg-rich motif (residues 665-673). Mg(2+) is required as a cofactor.

The protein resides in the cytoplasm. It localises to the cell inner membrane. It catalyses the reaction Endonucleolytic cleavage of single-stranded RNA in A- and U-rich regions.. Endoribonuclease that plays a central role in rRNA processing and mRNA decay, and probably tRNA processing. Acts on 9S rRNA (the precursor of 5S rRNA) and RNAI, a molecule that controls the replication of ColE1 plasmid. Upon expression in E.coli does not purify with endogenous degradosome proteins. Prefers 5'-monophosphorylated substrates over 5'-triphosphorylated substrates. Complements an rne temperature-sensitive mutation in E.coli, despite being considerably shorter and not able to interact with the E.coli degradosome. Cleaves AU-rich sequences in vitro, tested with psbA2 mRNA. Complements both an rne temperature-sensitive mutation and an rng deletion in E.coli. Acts in the degradation of psaL mRNA in the presence but not the absence of the sRNA PsrR1. Cleaves the rimO-crhR transcript, contributing to the very short half-life of rimO mRNA. Its function is as follows. mRNA for psbA2, one of the core proteins in photosystem II, is degraded in the dark under control of a cis-acting AU-rich box in its 5'-UTR. RNase E cuts in this box, suggesting it is involved in this dark-induced mRNA instability. In terms of biological role, CRISPR (clustered regularly interspaced short palindromic repeat) is an adaptive immune system that provides protection against mobile genetic elements (viruses, transposable elements and conjugative plasmids). CRISPR clusters contain spacers, sequences complementary to antecedent mobile elements, and target invading nucleic acids. CRISPR clusters are transcribed and processed into CRISPR RNA (crRNA). Endogenous RNase E is required for correct processing of pre-crRNA for the CRISPR3 subtype III-B system in this genome (genes sll7080 to sll7095). This CRISPR3 system does not include a cas6 gene, which is the usual RNase involved in crRNA maturation. The protein is Ribonuclease E of Synechocystis sp. (strain ATCC 27184 / PCC 6803 / Kazusa).